The sequence spans 390 residues: MREELKGIFASVFGEKEGLRFFFAPGRVNLIGEHTDYNGGHVFPCALTMGTYAAVAERNDGLVRMYSDNFRNAGIKECSLDDIRYQKEDDWANYPKGVIYEFQQRGYAVPHGFDIVFSGNIPNGAGLSSSASIELLMGVVLQSYFHPEVDALELVKMAQHAENHFIGVNCGIMDQFAIGMGKKHHAMLLNCDTLDYEYSKLNVSGLALVIANTNKKRTLADSSYNTRRQECNDALLDLKKGLDIAALGDIKPSDFDAHSSLIQNETNRRRAKHAVYENHRAIKTAHMFKENNIDEIGQLMKESHLSLKDDYEVTCPELDELVFAAWDHEGVIGSRMTGAGFGGCTISIVKDEFVDDFIQKVGDRYQEKTGLRADFYVADIGEGARELKGE.

33-36 (EHTD) serves as a coordination point for substrate. ATP is bound by residues serine 67 and 124 to 130 (GAGLSSS). The Mg(2+) site is built by serine 130 and glutamate 162. Aspartate 174 serves as the catalytic Proton acceptor. Tyrosine 224 is a substrate binding site.

It belongs to the GHMP kinase family. GalK subfamily.

It localises to the cytoplasm. It catalyses the reaction alpha-D-galactose + ATP = alpha-D-galactose 1-phosphate + ADP + H(+). Its pathway is carbohydrate metabolism; galactose metabolism. Functionally, catalyzes the transfer of the gamma-phosphate of ATP to D-galactose to form alpha-D-galactose-1-phosphate (Gal-1-P). The protein is Galactokinase of Bacillus subtilis (strain 168).